The sequence spans 364 residues: Developmentally-regulated GTP-binding protein 2 homolog (364 aa).

Positions 63-288 (ARVALIGFPS…LLDKIWDYLN (226 aa)) constitute an OBG-type G domain. Residues 69–76 (GFPSVGKS), 115–119 (DTPGI), and 246–249 (NKMD) contribute to the GTP site. A TGS domain is found at 288–363 (NLVRVYTKLR…EDEDVIQIVK (76 aa)).

The protein belongs to the TRAFAC class OBG-HflX-like GTPase superfamily. OBG GTPase family.

This is Developmentally-regulated GTP-binding protein 2 homolog (drg2) from Dictyostelium discoideum (Social amoeba).